The primary structure comprises 176 residues: Crossover junction endodeoxyribonuclease RuvC (176 aa).

Active-site residues include D12, E72, and D144. Mg(2+) contacts are provided by D12, E72, and D144.

The protein belongs to the RuvC family. In terms of assembly, homodimer which binds Holliday junction (HJ) DNA. The HJ becomes 2-fold symmetrical on binding to RuvC with unstacked arms; it has a different conformation from HJ DNA in complex with RuvA. In the full resolvosome a probable DNA-RuvA(4)-RuvB(12)-RuvC(2) complex forms which resolves the HJ. Requires Mg(2+) as cofactor.

It is found in the cytoplasm. It catalyses the reaction Endonucleolytic cleavage at a junction such as a reciprocal single-stranded crossover between two homologous DNA duplexes (Holliday junction).. In terms of biological role, the RuvA-RuvB-RuvC complex processes Holliday junction (HJ) DNA during genetic recombination and DNA repair. Endonuclease that resolves HJ intermediates. Cleaves cruciform DNA by making single-stranded nicks across the HJ at symmetrical positions within the homologous arms, yielding a 5'-phosphate and a 3'-hydroxyl group; requires a central core of homology in the junction. The consensus cleavage sequence is 5'-(A/T)TT(C/G)-3'. Cleavage occurs on the 3'-side of the TT dinucleotide at the point of strand exchange. HJ branch migration catalyzed by RuvA-RuvB allows RuvC to scan DNA until it finds its consensus sequence, where it cleaves and resolves the cruciform DNA. This Methylocella silvestris (strain DSM 15510 / CIP 108128 / LMG 27833 / NCIMB 13906 / BL2) protein is Crossover junction endodeoxyribonuclease RuvC.